A 402-amino-acid chain; its full sequence is S-adenosylmethionine synthase (402 aa).

His-17 lines the ATP pocket. Mg(2+) is bound at residue Asp-19. Glu-45 contacts K(+). L-methionine-binding residues include Glu-58 and Gln-101. Residues 101–111 (QSSDIADGVNE) are flexible loop. ATP is bound by residues 177–179 (DAK), 244–245 (RF), Asp-253, 259–260 (RK), Ala-276, and Lys-280. Asp-253 contacts L-methionine. Lys-284 provides a ligand contact to L-methionine.

It belongs to the AdoMet synthase family. As to quaternary structure, homotetramer; dimer of dimers. Mg(2+) is required as a cofactor. It depends on K(+) as a cofactor.

The protein resides in the cytoplasm. The enzyme catalyses L-methionine + ATP + H2O = S-adenosyl-L-methionine + phosphate + diphosphate. It functions in the pathway amino-acid biosynthesis; S-adenosyl-L-methionine biosynthesis; S-adenosyl-L-methionine from L-methionine: step 1/1. Its function is as follows. Catalyzes the formation of S-adenosylmethionine (AdoMet) from methionine and ATP. The overall synthetic reaction is composed of two sequential steps, AdoMet formation and the subsequent tripolyphosphate hydrolysis which occurs prior to release of AdoMet from the enzyme. The protein is S-adenosylmethionine synthase of Lactobacillus johnsonii (strain CNCM I-12250 / La1 / NCC 533).